The following is a 449-amino-acid chain: Aminopeptidase C (449 aa).

Active-site residues include Cys-70, His-364, and Asn-385.

It belongs to the peptidase C1 family. In terms of assembly, homohexamer.

It localises to the cytoplasm. The enzyme catalyses Inactivates bleomycin B2 (a cytotoxic glycometallopeptide) by hydrolysis of a carboxyamide bond of beta-aminoalanine, but also shows general aminopeptidase activity. The specificity varies somewhat with source, but amino acid arylamides of Met, Leu and Ala are preferred.. This is Aminopeptidase C (pepC) from Lactobacillus delbrueckii subsp. lactis.